We begin with the raw amino-acid sequence, 77 residues long: SS18-like protein 2 (77 aa).

An SH2-binding motif is present at residues Tyr50–Val53.

This sequence belongs to the SS18 family.

In Mus musculus (Mouse), this protein is SS18-like protein 2 (Ss18l2).